A 62-amino-acid chain; its full sequence is MGRGLSTKKFYFKIGVQLKSNWNPLIDKLISILKLNSFYSSFVLRLIKLCLTKYLLLYAQQH.

It is found in the plastid. The protein resides in the chloroplast. This is an uncharacterized protein from Chlamydomonas reinhardtii (Chlamydomonas smithii).